Here is a 337-residue protein sequence, read N- to C-terminus: Zinc finger protein 488 (337 aa).

Residues 1–10 show a composition bias toward polar residues; that stretch reads MAAGTSTLLS. 3 disordered regions span residues 1-32, 55-83, and 146-179; these read MAAG…SVEK, SDTA…PRLD, and SAWP…MLLA. The segment at 69–184 is important for transcriptional repression activity; it reads TELSLPTAPN…PMLLAGGSAE (116 aa). 2 consecutive C2H2-type zinc fingers follow at residues 272-299 and 314-336; these read NWCA…KREH and LTCP…MASH. The Nuclear localization signal motif lies at 295–302; it reads HKREHVGP.

The protein belongs to the krueppel C2H2-type zinc-finger protein family. Interacts with OLIG2.

It is found in the nucleus. Functionally, transcriptional repressor. Plays a role in oligodendrocyte differentiation, together with OLIG2. Mediates Notch signaling-activated formation of oligodendrocyte precursors. Promotes differentiation of adult neural stem progenitor cells (NSPCs) into mature oligodendrocytes and contributes to remyelination following nerve injury. This Mus musculus (Mouse) protein is Zinc finger protein 488 (Znf488).